The following is a 925-amino-acid chain: Ectonucleotide pyrophosphatase/phosphodiesterase family member 1 (925 aa).

A compositionally biased stretch (gly residues) spans 1-17 (MERDGCAGGGSRGGEGG). A disordered region spans residues 1–43 (MERDGCAGGGSRGGEGGRAPREGPAGNGRDRGRSHAAEAPGDP). Topologically, residues 1-76 (MERDGCAGGG…RTAKDPNTYK (76 aa)) are cytoplasmic. Residues 45 to 52 (AAASLLAP) carry the Di-leucine motif motif. Residues 77 to 97 (VLSLVLSVCVLTTILGCIFGL) form a helical; Signal-anchor for type II membrane protein membrane-spanning segment. Over 98 to 925 (KPSCAKEVKS…THLPTFSQED (828 aa)) the chain is Extracellular. 2 consecutive SMB domains span residues 104 to 144 (EVKS…IEPE) and 145 to 189 (HIWT…GEKS). Disulfide bonds link C108–C122, C112–C140, C120–C133, C126–C132, C149–C166, C154–C184, C164–C177, C170–C176, C195–C241, and C203–C415. Residue N179 is glycosylated (N-linked (GlcNAc...) asparagine). Positions 191–591 (VEEPCESINE…APNNGTHGSL (401 aa)) are phosphodiesterase. Residues D218, T256, and N277 each contribute to the AMP site. The Zn(2+) site is built by D218 and T256. T256 serves as the catalytic AMP-threonine intermediate. The CMP site is built by T256 and N277. DTMP-binding residues include T256 and N277. Positions 256 and 277 each coordinate GMP. A Phosphothreonine modification is found at T256. N285 carries an N-linked (GlcNAc...) asparagine glycan. The GMP site is built by L290, K295, and Y340. AMP is bound by residues K295 and Y340. CMP is bound by residues K295 and Y340. Y340 serves as a coordination point for dTMP. N341 carries N-linked (GlcNAc...) asparagine glycosylation. D376 contributes to the AMP binding site. Positions 376, 380, 423, and 424 each coordinate Zn(2+). Position 376 (D376) interacts with CMP. D376 is a binding site for dTMP. Position 376 (D376) interacts with GMP. H380 lines the 2',3'-cGAMP pocket. Position 424 (H424) interacts with AMP. H424 is a binding site for CMP. Residue H424 coordinates dTMP. H424 contributes to the GMP binding site. 6 disulfide bridges follow: C431–C530, C480–C868, C614–C672, C626–C726, C628–C711, and C838–C848. A glycan (N-linked (GlcNAc...) asparagine) is linked at N477. S532 lines the 2',3'-cGAMP pocket. Residue H535 participates in AMP binding. H535 serves as a coordination point for Zn(2+). H535 contributes to the CMP binding site. H535 is a dTMP binding site. H535 contacts GMP. N-linked (GlcNAc...) asparagine glycosylation is found at N585, N643, N700, N731, and N748. The segment at 597–647 (NPVYTPKHPKEVHPLVQCPFTRNPRDNLGCSCNPSILPIEDFQTQFNLTVA) is linker. Residues 654–925 (HETLPYGRPR…THLPTFSQED (272 aa)) are nuclease-like domain. Residues D800, D802, D804, R806, and D808 each coordinate Ca(2+).

The protein belongs to the nucleotide pyrophosphatase/phosphodiesterase family. As to quaternary structure, homodimer. Interacts with INSR; leading to inhibit INSR autophosphorylation and subsequent activation of INSR kinase activity. Monomeric. Zn(2+) serves as cofactor. Post-translationally, autophosphorylated as part of the catalytic cycle of phosphodiesterase/pyrophosphatase activity. In terms of processing, N-glycosylated. The secreted form is produced through cleavage at Lys-103 by intracellular processing. In terms of tissue distribution, expressed in plasma cells and also in a number of non-lymphoid tissues, including the distal convoluted tubule of the kidney, chondrocytes and epididymis. Expressed in melanocytes but not in keratinocytes.

Its subcellular location is the cell membrane. It is found in the basolateral cell membrane. The protein resides in the secreted. The catalysed reaction is Hydrolytically removes 5'-nucleotides successively from the 3'-hydroxy termini of 3'-hydroxy-terminated oligonucleotides.. It carries out the reaction a ribonucleoside 5'-triphosphate + H2O = a ribonucleoside 5'-phosphate + diphosphate + H(+). The enzyme catalyses ATP + H2O = AMP + diphosphate + H(+). It catalyses the reaction UTP + H2O = UMP + diphosphate + H(+). The catalysed reaction is GTP + H2O = GMP + diphosphate + H(+). It carries out the reaction CTP + H2O = CMP + diphosphate + H(+). The enzyme catalyses 2',3'-cGAMP + 2 H2O = GMP + AMP + 2 H(+). It catalyses the reaction P(1),P(4)-bis(5'-adenosyl) tetraphosphate + H2O = AMP + ATP + 2 H(+). The catalysed reaction is 3',5'-cyclic AMP + H2O = AMP + H(+). Its activity is regulated as follows. At low concentrations of ATP, a phosphorylated intermediate is formed which inhibits further hydrolysis. In terms of biological role, nucleotide pyrophosphatase that generates diphosphate (PPi) and functions in bone mineralization and soft tissue calcification by regulating pyrophosphate levels. PPi inhibits bone mineralization and soft tissue calcification by binding to nascent hydroxyapatite crystals, thereby preventing further growth of these crystals. Preferentially hydrolyzes ATP, but can also hydrolyze other nucleoside 5' triphosphates such as GTP, CTP and UTP to their corresponding monophosphates with release of pyrophosphate, as well as diadenosine polyphosphates, and also 3',5'-cAMP to AMP. May also be involved in the regulation of the availability of nucleotide sugars in the endoplasmic reticulum and Golgi, and the regulation of purinergic signaling. Inhibits ectopic joint calcification and maintains articular chondrocytes by repressing hedgehog signaling; it is however unclear whether hedgehog inhibition is direct or indirect. Appears to modulate insulin sensitivity and function. Also involved in melanogenesis. Also able to hydrolyze 2',3'-cGAMP (cyclic GMP-AMP), a second messenger that activates TMEM173/STING and triggers type-I interferon production. 2',3'-cGAMP degradation takes place in the lumen or extracellular space, and not in the cytosol where it is produced; the role of 2',3'-cGAMP hydrolysis is therefore unclear. Not able to hydrolyze the 2',3'-cGAMP linkage isomer 3'-3'-cGAMP. This Homo sapiens (Human) protein is Ectonucleotide pyrophosphatase/phosphodiesterase family member 1.